Consider the following 440-residue polypeptide: MPAALHRRSWVPAASEDHVLAIAADAAARDAAGVAAEVERLVADSHRIHDVDGLNLNPATNVMNPAAEALLSRGLGSRPSLGYPGDKYEMGLEAIERIEVVAAELAAEVFGARFAEVRVSSGALSNLYVFMATCQPGDTIIAPPPAIGGHVTHHAAGAAGLYGLKTVPAPVDADGYSVDVVALAKLAREVKPKLITIGGSLNLFPHPVPAIREVADSVGAKVLFDAAHLSGMVAGKAWPQPLEDGAHAITMSTYKSLGGPAGGLIVSNDAALMERIDAIAYPGLTANSDAGRTAALARGLLDWKVHGTAYAAAMRDTAQALARALDALGLPVFAKARGFTQSHQFALEAARWGGGQRAAKQLARGGLLACGIGLPIAPVDGDINGLRLGVPEIVRLGFTPEDMPQLAGWIARALAGDAPAVAAEVRERRTRLNGLRYIVR.

K255 carries the post-translational modification N6-(pyridoxal phosphate)lysine.

Belongs to the SHMT family. Alpha-methylserine aldolase subfamily. In terms of assembly, homodimer. Requires pyridoxal 5'-phosphate as cofactor.

The catalysed reaction is 2-methyl-L-serine = formaldehyde + L-alanine. It carries out the reaction 2-ethyl-L-serine = (2S)-2-aminobutanoate + formaldehyde. Its activity is regulated as follows. In the alpha-methyl-L-serine synthesis reaction, activity is inhibited by an excess amount of formaldehyde (at a concentration greater than 4 mM). Formaldehyde release activity is reduced by the sulfhydryl reagent N-ethylmaleimide, iodoacetate amide and iodoacetic acid, but not by dithiothreitol and 2-mercaptoethanol. Activity is enhanced by 1 mM of manganese chloride. Its function is as follows. Catalyzes the reversible interconversion of alpha-methyl-L-serine to L-alanine and formaldehyde. Can also catalyze the synthesis of alpha-ethyl-L-serine from L-2-aminobutyric acid and formaldehyde. Also shows low alanine racemase activity. Cannot use alpha-methyl-D-serine, L-serine, D-serine, (S)-2-amino-1-propanol, (R)-2-amino-1-propanol, (S)-alpha-hydroxymethyltyrosine, (R)-alpha-hydroxymethyltyrosine, alpha-iso-butyl-DL-serine, alpha-iso-propyl-DL-serine or alpha-benzyl-DL-serine. Cannot use D-alanine instead of L-alanine as the substrate for alpha-methyl-L-serine synthesis. Does not require tetrahydrofolate (THF) for activity. This chain is Alpha-methylserine aldolase, found in Variovorax paradoxus.